Reading from the N-terminus, the 195-residue chain is Probable GTP-binding protein EngB (195 aa).

In terms of domain architecture, EngB-type G spans 22–194; sequence LKGEVAFVGR…LDLISTLLKE (173 aa). Residues 30–37, 56–60, 74–77, 141–144, and 173–175 contribute to the GTP site; these read GRSNVGKS, GKTRS, DLPG, TKMD, and TSS. The Mg(2+) site is built by Ser37 and Thr58.

It belongs to the TRAFAC class TrmE-Era-EngA-EngB-Septin-like GTPase superfamily. EngB GTPase family. The cofactor is Mg(2+).

Functionally, necessary for normal cell division and for the maintenance of normal septation. The polypeptide is Probable GTP-binding protein EngB (Thermotoga petrophila (strain ATCC BAA-488 / DSM 13995 / JCM 10881 / RKU-1)).